The following is a 185-amino-acid chain: Translation initiation factor IF-3 (185 aa).

It belongs to the IF-3 family. As to quaternary structure, monomer.

Its subcellular location is the cytoplasm. In terms of biological role, IF-3 binds to the 30S ribosomal subunit and shifts the equilibrium between 70S ribosomes and their 50S and 30S subunits in favor of the free subunits, thus enhancing the availability of 30S subunits on which protein synthesis initiation begins. This is Translation initiation factor IF-3 from Bacteroides thetaiotaomicron (strain ATCC 29148 / DSM 2079 / JCM 5827 / CCUG 10774 / NCTC 10582 / VPI-5482 / E50).